An 854-amino-acid chain; its full sequence is Disrupted in schizophrenia 1 protein (854 aa).

Residues M1–V18 are compositionally biased toward gly residues. 4 disordered regions span residues M1–S24, S179–A205, G221–E257, and A278–A323. Residues M1–H292 form an interaction with MAP1A region. Residues P197–H203 carry the Interaction with FBXW7 motif. Basic and acidic residues predominate over residues S285–P295. The tract at residues S293 to E696 is interaction with TRAF3IP1. The span at D296 to L309 shows a compositional bias: low complexity. Coiled coils occupy residues E366 to L394, I452 to T505, and W602 to E666. K372 participates in a covalent cross-link: Glycyl lysine isopeptide (Lys-Gly) (interchain with G-Cter in ubiquitin). A required for localization to punctate cytoplasmic foci region spans residues L440 to S597. A necessary and sufficient for interaction with PCNT and localization at the centrosome region spans residues D446–A854. The segment at G598–A854 is interaction with ATF4 and ATF5. The interval V716–E739 is disordered. Positions G727–A854 are interaction with PAFAH1B1. Residues S802–Q830 adopt a coiled-coil conformation. An interaction with NDEL1 region spans residues S802–A835.

As to quaternary structure, interacts with NDEL1. Interacts with CCDC88A (via C-terminus); the interaction is direct. Interacts with GSK3B. Interacts with tubulin alpha, ACTN2, ANKHD1, ATF4, ATF5, CEP63, EIF3S3, MAP1A, NDEL1, PAFAH1B1, RANBP9, SPTBN4, SYNE1 and TRAF3IP1. Interaction with microtubules may be mediated in part by TRAF3IP1. Interacts (via C-terminal) with PCNT. Interacts with CHCHD6. Interacts with CCDC141. Interacts with FBXW7, the substrate-recognition component of a SCF (SKP1-CUL1-F-box protein) E3 ubiquitin-protein ligase complex; the interaction targets DISC1 for proteasomal degradation. Interacts with ZNF365. Interacts with ATF4; inhibiting ATF4 transcription factor activity by disrupting ATF4 dimerization and DNA-binding. Interacts with PDE4B (isoform PDE4B5). Post-translationally, ubiquitinated. Ubiquitination with 'Lys-48'-linked polyubiquitin chains leads to its proteasomal degradation. Ubiquitous. Highly expressed in the dentate gyrus of the hippocampus. Also expressed in the temporal and parahippocampal cortices and cells of the white matter.

The protein localises to the cytoplasm. It localises to the cytoskeleton. It is found in the mitochondrion. Its subcellular location is the microtubule organizing center. The protein resides in the centrosome. The protein localises to the postsynaptic density. Functionally, involved in the regulation of multiple aspects of embryonic and adult neurogenesis. Required for neural progenitor proliferation in the ventrical/subventrical zone during embryonic brain development and in the adult dentate gyrus of the hippocampus. Participates in the Wnt-mediated neural progenitor proliferation as a positive regulator by modulating GSK3B activity and CTNNB1 abundance. Plays a role as a modulator of the AKT-mTOR signaling pathway controlling the tempo of the process of newborn neurons integration during adult neurogenesis, including neuron positioning, dendritic development and synapse formation. Inhibits the activation of AKT-mTOR signaling upon interaction with CCDC88A. Regulates the migration of early-born granule cell precursors toward the dentate gyrus during the hippocampal development. Inhibits ATF4 transcription factor activity in neurons by disrupting ATF4 dimerization and DNA-binding. Plays a role, together with PCNT, in the microtubule network formation. The polypeptide is Disrupted in schizophrenia 1 protein (Homo sapiens (Human)).